The sequence spans 166 residues: NAD(P)H-quinone oxidoreductase subunit I, chloroplastic (166 aa).

4Fe-4S ferredoxin-type domains follow at residues 55–84 and 95–124; these read GRIH…VDWK and LNYS…MTEE. [4Fe-4S] cluster-binding residues include Cys64, Cys67, Cys70, Cys74, Cys104, Cys107, Cys110, and Cys114.

The protein belongs to the complex I 23 kDa subunit family. As to quaternary structure, NDH is composed of at least 16 different subunits, 5 of which are encoded in the nucleus. [4Fe-4S] cluster serves as cofactor.

Its subcellular location is the plastid. It localises to the chloroplast thylakoid membrane. It carries out the reaction a plastoquinone + NADH + (n+1) H(+)(in) = a plastoquinol + NAD(+) + n H(+)(out). It catalyses the reaction a plastoquinone + NADPH + (n+1) H(+)(in) = a plastoquinol + NADP(+) + n H(+)(out). In terms of biological role, NDH shuttles electrons from NAD(P)H:plastoquinone, via FMN and iron-sulfur (Fe-S) centers, to quinones in the photosynthetic chain and possibly in a chloroplast respiratory chain. The immediate electron acceptor for the enzyme in this species is believed to be plastoquinone. Couples the redox reaction to proton translocation, and thus conserves the redox energy in a proton gradient. The chain is NAD(P)H-quinone oxidoreductase subunit I, chloroplastic from Polymnia canadensis (White-flowered leaf-cup).